A 294-amino-acid polypeptide reads, in one-letter code: Beta-glucoside kinase (294 aa).

ATP is bound at residue Ala-5–Thr-11.

It belongs to the ROK (NagC/XylR) family.

It catalyses the reaction D-cellobiose + ATP = 6-phospho-beta-D-glucosyl-(1-&gt;4)-D-glucose + ADP + H(+). In terms of biological role, catalyzes the ATP-dependent phosphorylation of cellobiose to produce cellobiose-6'-P. May have a dual role of kinase and transcriptional regulator of the cellobiose-PTS operon. The polypeptide is Beta-glucoside kinase (bglK) (Listeria monocytogenes serovar 1/2a (strain ATCC BAA-679 / EGD-e)).